The chain runs to 185 residues: Acireductone dioxygenase (185 aa).

Fe(2+)-binding residues include His96, His98, Glu102, and His140. Ni(2+) is bound by residues His96, His98, Glu102, and His140.

The protein belongs to the acireductone dioxygenase (ARD) family. In terms of assembly, monomer. Requires Fe(2+) as cofactor. It depends on Ni(2+) as a cofactor.

It catalyses the reaction 1,2-dihydroxy-5-(methylsulfanyl)pent-1-en-3-one + O2 = 3-(methylsulfanyl)propanoate + CO + formate + 2 H(+). The catalysed reaction is 1,2-dihydroxy-5-(methylsulfanyl)pent-1-en-3-one + O2 = 4-methylsulfanyl-2-oxobutanoate + formate + 2 H(+). Its pathway is amino-acid biosynthesis; L-methionine biosynthesis via salvage pathway; L-methionine from S-methyl-5-thio-alpha-D-ribose 1-phosphate: step 5/6. Functionally, catalyzes 2 different reactions between oxygen and the acireductone 1,2-dihydroxy-3-keto-5-methylthiopentene (DHK-MTPene) depending upon the metal bound in the active site. Fe-containing acireductone dioxygenase (Fe-ARD) produces formate and 2-keto-4-methylthiobutyrate (KMTB), the alpha-ketoacid precursor of methionine in the methionine recycle pathway. Ni-containing acireductone dioxygenase (Ni-ARD) produces methylthiopropionate, carbon monoxide and formate, and does not lie on the methionine recycle pathway. The sequence is that of Acireductone dioxygenase from Hahella chejuensis (strain KCTC 2396).